The sequence spans 301 residues: Bifunctional protein FolD (301 aa).

Residues 166–168 (GKS), S191, and I232 each bind NADP(+).

This sequence belongs to the tetrahydrofolate dehydrogenase/cyclohydrolase family. In terms of assembly, homodimer.

It carries out the reaction (6R)-5,10-methylene-5,6,7,8-tetrahydrofolate + NADP(+) = (6R)-5,10-methenyltetrahydrofolate + NADPH. The enzyme catalyses (6R)-5,10-methenyltetrahydrofolate + H2O = (6R)-10-formyltetrahydrofolate + H(+). It functions in the pathway one-carbon metabolism; tetrahydrofolate interconversion. Catalyzes the oxidation of 5,10-methylenetetrahydrofolate to 5,10-methenyltetrahydrofolate and then the hydrolysis of 5,10-methenyltetrahydrofolate to 10-formyltetrahydrofolate. The protein is Bifunctional protein FolD of Orientia tsutsugamushi (strain Boryong) (Rickettsia tsutsugamushi).